A 338-amino-acid polypeptide reads, in one-letter code: Tetraacyldisaccharide 4'-kinase (338 aa).

An ATP-binding site is contributed by 61–68 (TLGGTGKT).

This sequence belongs to the LpxK family.

The enzyme catalyses a lipid A disaccharide + ATP = a lipid IVA + ADP + H(+). The protein operates within glycolipid biosynthesis; lipid IV(A) biosynthesis; lipid IV(A) from (3R)-3-hydroxytetradecanoyl-[acyl-carrier-protein] and UDP-N-acetyl-alpha-D-glucosamine: step 6/6. Functionally, transfers the gamma-phosphate of ATP to the 4'-position of a tetraacyldisaccharide 1-phosphate intermediate (termed DS-1-P) to form tetraacyldisaccharide 1,4'-bis-phosphate (lipid IVA). The protein is Tetraacyldisaccharide 4'-kinase of Nitrosococcus oceani (strain ATCC 19707 / BCRC 17464 / JCM 30415 / NCIMB 11848 / C-107).